The primary structure comprises 406 residues: Enoyl-[acyl-carrier-protein] reductase [NADH] (406 aa).

NAD(+)-binding positions include 48 to 53 (GASTGF), 74 to 75 (FE), 111 to 112 (DA), and 140 to 141 (IA). Tyrosine 226 serves as a coordination point for substrate. Tyrosine 236 serves as the catalytic Proton donor. Residues lysine 245 and 275–277 (LVT) each bind NAD(+).

Belongs to the TER reductase family. As to quaternary structure, monomer.

The catalysed reaction is a 2,3-saturated acyl-[ACP] + NAD(+) = a (2E)-enoyl-[ACP] + NADH + H(+). It functions in the pathway lipid metabolism; fatty acid biosynthesis. Involved in the final reduction of the elongation cycle of fatty acid synthesis (FAS II). Catalyzes the reduction of a carbon-carbon double bond in an enoyl moiety that is covalently linked to an acyl carrier protein (ACP). The protein is Enoyl-[acyl-carrier-protein] reductase [NADH] of Coxiella burnetii (strain Dugway 5J108-111).